Reading from the N-terminus, the 187-residue chain is Large ribosomal subunit protein uL22 (187 aa).

Basic and acidic residues-rich tracts occupy residues Thr158 to Lys168 and Arg178 to Glu187. The tract at residues Thr158–Glu187 is disordered.

Belongs to the universal ribosomal protein uL22 family.

This is Large ribosomal subunit protein uL22 (RpL17) from Anopheles gambiae (African malaria mosquito).